A 31-amino-acid chain; its full sequence is Hemocyanin subunit 2 (31 aa).

Belongs to the tyrosinase family. Hemocyanin subfamily. In terms of tissue distribution, hemolymph.

Its subcellular location is the secreted. The protein localises to the extracellular space. Functionally, hemocyanins are copper-containing oxygen carriers occurring freely dissolved in the hemolymph of many mollusks and arthropods. The sequence is that of Hemocyanin subunit 2 from Maja squinado (Mediterranean spider crab).